The following is a 167-amino-acid chain: I-Kappa-B like protein F2 (167 aa).

ANK repeat units follow at residues 54–86 (HGKQ…DING), 91–121 (FGNT…NMGI), and 125–154 (LFKT…RCGV).

It belongs to the polydnaviridae I-Kappa-B-like protein family.

Functionally, suppresses the host immune response through NF-kappa-B inactivation. Possesses ankyrin repeat domains required for NF-kappa-B binding but lacks the regulatory regions required for dissociation from NF-kappa-B and degradation. Therefore, prevents host NF-kappa-B release and subsequent activation. This is I-Kappa-B like protein F2 (F3) from Microplitis demolitor bracovirus (isolate Webb) (MdBV).